A 215-amino-acid chain; its full sequence is Cytochrome b6 (215 aa).

A helical transmembrane segment spans residues 32 to 52; that stretch reads IFYCLGGITLTCFLVQVATGF. Cysteine 35 is a binding site for heme c. 2 residues coordinate heme b: histidine 86 and histidine 100. A run of 3 helical transmembrane segments spans residues 90 to 110, 116 to 136, and 186 to 206; these read ASMM…TGGF, LTWV…VTGY, and LHTF…FLMI. Heme b contacts are provided by histidine 187 and histidine 202.

This sequence belongs to the cytochrome b family. PetB subfamily. As to quaternary structure, the 4 large subunits of the cytochrome b6-f complex are cytochrome b6, subunit IV (17 kDa polypeptide, PetD), cytochrome f and the Rieske protein, while the 4 small subunits are PetG, PetL, PetM and PetN. The complex functions as a dimer. It depends on heme b as a cofactor. Heme c serves as cofactor.

Its subcellular location is the plastid. The protein localises to the chloroplast thylakoid membrane. Component of the cytochrome b6-f complex, which mediates electron transfer between photosystem II (PSII) and photosystem I (PSI), cyclic electron flow around PSI, and state transitions. In Pisum sativum (Garden pea), this protein is Cytochrome b6.